Here is a 212-residue protein sequence, read N- to C-terminus: Ribosomal RNA small subunit methyltransferase G (212 aa).

S-adenosyl-L-methionine-binding positions include phenylalanine 78, 96 to 98 (ESS), 124 to 125 (VE), and arginine 141.

Belongs to the methyltransferase superfamily. RNA methyltransferase RsmG family.

It is found in the cytoplasm. In terms of biological role, specifically methylates the N7 position of a guanine in 16S rRNA. The polypeptide is Ribosomal RNA small subunit methyltransferase G (Onion yellows phytoplasma (strain OY-M)).